A 693-amino-acid chain; its full sequence is Ion-translocating oxidoreductase complex subunit C (693 aa).

4Fe-4S ferredoxin-type domains lie at 368 to 397 (MEPV…QQLY) and 407 to 436 (KARD…VQYY). C377, C380, C383, C387, C416, C419, C422, and C426 together coordinate [4Fe-4S] cluster. Basic and acidic residues predominate over residues 539–548 (REERVREKQS). Residues 539 to 564 (REERVREKQSQQETPATEVTPEELDP) form a disordered region.

This sequence belongs to the 4Fe4S bacterial-type ferredoxin family. RnfC subfamily. The complex is composed of six subunits: RnfA, RnfB, RnfC, RnfD, RnfE and RnfG. [4Fe-4S] cluster is required as a cofactor.

The protein localises to the cell inner membrane. Part of a membrane-bound complex that couples electron transfer with translocation of ions across the membrane. This chain is Ion-translocating oxidoreductase complex subunit C, found in Pectobacterium atrosepticum (strain SCRI 1043 / ATCC BAA-672) (Erwinia carotovora subsp. atroseptica).